The chain runs to 265 residues: 14-3-3-like protein GF14-D (265 aa).

The interval 244–265 (DANDDGGDEIKEAAAPKEPGDQ) is disordered. Residues 251–265 (DEIKEAAAPKEPGDQ) show a composition bias toward basic and acidic residues.

The protein belongs to the 14-3-3 family. As to quaternary structure, interacts with BZR1. Interacts with ABI5.

Its function is as follows. Is associated with a DNA binding complex that binds to the G box, a well-characterized cis-acting DNA regulatory element found in plant genes. This chain is 14-3-3-like protein GF14-D (GF14D), found in Oryza sativa subsp. japonica (Rice).